We begin with the raw amino-acid sequence, 241 residues long: 4-hydroxy-tetrahydrodipicolinate reductase (241 aa).

Residues 7–12, 74–76, and 98–101 contribute to the NAD(+) site; these read GVNGHM, GTT, and STNM. The Proton donor/acceptor role is filled by His-131. His-132 provides a ligand contact to (S)-2,3,4,5-tetrahydrodipicolinate. The active-site Proton donor is the Lys-135. 141–142 is a (S)-2,3,4,5-tetrahydrodipicolinate binding site; it reads GS.

It belongs to the DapB family.

The protein localises to the cytoplasm. The catalysed reaction is (S)-2,3,4,5-tetrahydrodipicolinate + NAD(+) + H2O = (2S,4S)-4-hydroxy-2,3,4,5-tetrahydrodipicolinate + NADH + H(+). It catalyses the reaction (S)-2,3,4,5-tetrahydrodipicolinate + NADP(+) + H2O = (2S,4S)-4-hydroxy-2,3,4,5-tetrahydrodipicolinate + NADPH + H(+). It participates in amino-acid biosynthesis; L-lysine biosynthesis via DAP pathway; (S)-tetrahydrodipicolinate from L-aspartate: step 4/4. Functionally, catalyzes the conversion of 4-hydroxy-tetrahydrodipicolinate (HTPA) to tetrahydrodipicolinate. In Alkaliphilus oremlandii (strain OhILAs) (Clostridium oremlandii (strain OhILAs)), this protein is 4-hydroxy-tetrahydrodipicolinate reductase.